Reading from the N-terminus, the 59-residue chain is Ferredoxin (59 aa).

2 consecutive 4Fe-4S ferredoxin-type domains span residues 2-30 and 31-59; these read GKIT…LEVN and DHVE…LKVE. Residues cysteine 12, cysteine 15, cysteine 18, cysteine 22, cysteine 41, cysteine 44, cysteine 47, and cysteine 51 each contribute to the [4Fe-4S] cluster site.

[4Fe-4S] cluster serves as cofactor.

In terms of biological role, ferredoxins are iron-sulfur proteins that transfer electrons in a wide variety of metabolic reactions. This is Ferredoxin from Entamoeba histolytica (strain ATCC 30459 / HM-1:IMSS / ABRM).